The sequence spans 352 residues: Chorismate synthase (352 aa).

Arg48 lines the NADP(+) pocket. Residues 125–127 (RSS), 238–239 (NA), Gly278, 293–297 (KPTSS), and Arg319 each bind FMN.

This sequence belongs to the chorismate synthase family. Homotetramer. FMNH2 serves as cofactor.

The catalysed reaction is 5-O-(1-carboxyvinyl)-3-phosphoshikimate = chorismate + phosphate. The protein operates within metabolic intermediate biosynthesis; chorismate biosynthesis; chorismate from D-erythrose 4-phosphate and phosphoenolpyruvate: step 7/7. Catalyzes the anti-1,4-elimination of the C-3 phosphate and the C-6 proR hydrogen from 5-enolpyruvylshikimate-3-phosphate (EPSP) to yield chorismate, which is the branch point compound that serves as the starting substrate for the three terminal pathways of aromatic amino acid biosynthesis. This reaction introduces a second double bond into the aromatic ring system. In Legionella pneumophila (strain Paris), this protein is Chorismate synthase.